The sequence spans 194 residues: 7-methyl-GTP pyrophosphatase (194 aa).

Catalysis depends on Asp-70, which acts as the Proton acceptor.

Belongs to the Maf family. YceF subfamily. A divalent metal cation serves as cofactor.

The protein localises to the cytoplasm. The enzyme catalyses N(7)-methyl-GTP + H2O = N(7)-methyl-GMP + diphosphate + H(+). In terms of biological role, nucleoside triphosphate pyrophosphatase that hydrolyzes 7-methyl-GTP (m(7)GTP). May have a dual role in cell division arrest and in preventing the incorporation of modified nucleotides into cellular nucleic acids. The protein is 7-methyl-GTP pyrophosphatase of Vibrio vulnificus (strain YJ016).